Reading from the N-terminus, the 327-residue chain is Lipoyl synthase (327 aa).

Residues cysteine 72, cysteine 77, cysteine 83, cysteine 98, cysteine 102, cysteine 105, and serine 313 each contribute to the [4Fe-4S] cluster site. The Radical SAM core domain occupies cysteine 83–leucine 302.

It belongs to the radical SAM superfamily. Lipoyl synthase family. Requires [4Fe-4S] cluster as cofactor.

The protein resides in the cytoplasm. It catalyses the reaction [[Fe-S] cluster scaffold protein carrying a second [4Fe-4S](2+) cluster] + N(6)-octanoyl-L-lysyl-[protein] + 2 oxidized [2Fe-2S]-[ferredoxin] + 2 S-adenosyl-L-methionine + 4 H(+) = [[Fe-S] cluster scaffold protein] + N(6)-[(R)-dihydrolipoyl]-L-lysyl-[protein] + 4 Fe(3+) + 2 hydrogen sulfide + 2 5'-deoxyadenosine + 2 L-methionine + 2 reduced [2Fe-2S]-[ferredoxin]. It participates in protein modification; protein lipoylation via endogenous pathway; protein N(6)-(lipoyl)lysine from octanoyl-[acyl-carrier-protein]: step 2/2. Catalyzes the radical-mediated insertion of two sulfur atoms into the C-6 and C-8 positions of the octanoyl moiety bound to the lipoyl domains of lipoate-dependent enzymes, thereby converting the octanoylated domains into lipoylated derivatives. This Francisella tularensis subsp. novicida (strain U112) protein is Lipoyl synthase.